Here is a 505-residue protein sequence, read N- to C-terminus: Maturase K (505 aa).

Belongs to the intron maturase 2 family. MatK subfamily.

Its subcellular location is the plastid. The protein resides in the chloroplast. Its function is as follows. Usually encoded in the trnK tRNA gene intron. Probably assists in splicing its own and other chloroplast group II introns. In Illicium oligandrum (Star anise), this protein is Maturase K.